Here is a 782-residue protein sequence, read N- to C-terminus: Ribosome biogenesis protein ERB1 (782 aa).

Basic residues predominate over residues 1-11; sequence MSVNSRKRKVA. The segment at 1–120 is disordered; that stretch reads MSVNSRKRKV…LEGEEDESLK (120 aa). Acidic residues-rich tracts occupy residues 39 to 51 and 59 to 75; these read DESE…EDTD and LSDE…DEAE. Residues 82 to 92 show a composition bias toward polar residues; sequence RNLNTSGGSQQ. The segment covering 106-117 has biased composition (acidic residues); sequence GADGELEGEEDE. 2 WD repeats span residues 432 to 471 and 475 to 516; these read GQEG…QVWN and SDEE…PDVE. Residues 533 to 556 are disordered; it reads KPSTAANGEAPKQSPGKWSRPGSR. 4 WD repeats span residues 612–652, 653–692, 696–736, and 752–782; these read RLKG…KILQ, PGAK…KPYK, FHKE…DLME, and KSRL…RLWN.

It belongs to the WD repeat BOP1/ERB1 family. Component of the NOP7 complex, composed of ERB1, NOP7 and YTM1. The complex is held together by ERB1, which interacts with NOP7 via its N-terminal domain and with YTM1 via a high-affinity interaction between the seven-bladed beta-propeller domains of the 2 proteins. The NOP7 complex associates with the 66S pre-ribosome.

Its subcellular location is the nucleus. It localises to the nucleolus. The protein localises to the nucleoplasm. Component of the NOP7 complex, which is required for maturation of the 25S and 5.8S ribosomal RNAs and formation of the 60S ribosome. The chain is Ribosome biogenesis protein ERB1 from Phaeosphaeria nodorum (strain SN15 / ATCC MYA-4574 / FGSC 10173) (Glume blotch fungus).